The sequence spans 485 residues: NADH-quinone oxidoreductase subunit N (485 aa).

The next 14 membrane-spanning stretches (helical) occupy residues 8 to 28 (LIAL…MLSI), 35 to 55 (FLNA…LWFV), 71 to 91 (GFAM…CTFA), 105 to 125 (FYLL…ANHL), 127 to 147 (SLFL…GYAF), 159 to 179 (YTIL…LVYA), 203 to 223 (LLAG…LVPF), 235 to 255 (PAPV…GVVM), 271 to 291 (VVLA…ALSQ), 297 to 317 (LLGY…IALQ), 326 to 346 (VGVY…VVSL), 373 to 393 (AAVM…LGFI), 408 to 430 (WWLV…RVAV), and 455 to 475 (IVVL…QPLI).

The protein belongs to the complex I subunit 2 family. NDH-1 is composed of 13 different subunits. Subunits NuoA, H, J, K, L, M, N constitute the membrane sector of the complex.

Its subcellular location is the cell inner membrane. The enzyme catalyses a quinone + NADH + 5 H(+)(in) = a quinol + NAD(+) + 4 H(+)(out). NDH-1 shuttles electrons from NADH, via FMN and iron-sulfur (Fe-S) centers, to quinones in the respiratory chain. The immediate electron acceptor for the enzyme in this species is believed to be ubiquinone. Couples the redox reaction to proton translocation (for every two electrons transferred, four hydrogen ions are translocated across the cytoplasmic membrane), and thus conserves the redox energy in a proton gradient. The protein is NADH-quinone oxidoreductase subunit N of Shigella flexneri.